Here is a 465-residue protein sequence, read N- to C-terminus: Chromosomal replication initiator protein DnaA (465 aa).

Residues 1 to 87 are domain I, interacts with DnaA modulators; the sequence is MLWTDCLTRL…RPGSILSSSE (87 aa). Residues 81 to 123 are disordered; it reads SILSSSEQPATTTAALQTAPIPQPAKVKREPEPVANTAVSSKS. The span at 88–100 shows a compositional bias: low complexity; the sequence is QPATTTAALQTAP. The domain II stretch occupies residues 88–127; that stretch reads QPATTTAALQTAPIPQPAKVKREPEPVANTAVSSKSSKKK. A domain III, AAA+ region region spans residues 128-345; that stretch reads LLNPQFTFSL…GALNKVVAIS (218 aa). ATP-binding residues include Gly173, Gly175, Lys176, and Thr177. A domain IV, binds dsDNA region spans residues 346 to 465; the sequence is RFKGAPIDLD…YKNLLRLLQS (120 aa).

It belongs to the DnaA family. As to quaternary structure, oligomerizes as a right-handed, spiral filament on DNA at oriC.

The protein localises to the cytoplasm. Plays an essential role in the initiation and regulation of chromosomal replication. ATP-DnaA binds to the origin of replication (oriC) to initiate formation of the DNA replication initiation complex once per cell cycle. Binds the DnaA box (a 9 base pair repeat at the origin) and separates the double-stranded (ds)DNA. Forms a right-handed helical filament on oriC DNA; dsDNA binds to the exterior of the filament while single-stranded (ss)DNA is stabiized in the filament's interior. The ATP-DnaA-oriC complex binds and stabilizes one strand of the AT-rich DNA unwinding element (DUE), permitting loading of DNA polymerase. After initiation quickly degrades to an ADP-DnaA complex that is not apt for DNA replication. Binds acidic phospholipids. The chain is Chromosomal replication initiator protein DnaA from Acinetobacter baumannii (strain AB307-0294).